A 264-amino-acid polypeptide reads, in one-letter code: MPNYALLVEYDGTHFNGWQKQKNLPTVQSSIESALGIILRRNPASRLSVAGRTDTGVHALGMVCNFKTEHPIPNFHKLLVSLNALTPTGVSVKNVVEVPSDFHARFSCTGREYIYKLYYSKYESSFVEGRAFWVKGHIDWERVKKQLQVLVGEKDFRSFTKAKSMAGKRAVREILAIQLENLSPEWYQIRIRANGFMHNMVRITVGTLLDIGKGRWESRSIDSILEEKNRTQAGVTLPPDGLYFVRAYYEDHPEIHELYKIPLP.

The active-site Nucleophile is Asp-54. Tyr-113 lines the substrate pocket.

The protein belongs to the tRNA pseudouridine synthase TruA family. Homodimer.

The enzyme catalyses uridine(38/39/40) in tRNA = pseudouridine(38/39/40) in tRNA. Functionally, formation of pseudouridine at positions 38, 39 and 40 in the anticodon stem and loop of transfer RNAs. This Leptospira biflexa serovar Patoc (strain Patoc 1 / Ames) protein is tRNA pseudouridine synthase A.